The primary structure comprises 213 residues: Chloramphenicol acetyltransferase 2 (213 aa).

The active-site Proton acceptor is the H189.

This sequence belongs to the chloramphenicol acetyltransferase family. In terms of assembly, homotrimer.

The catalysed reaction is chloramphenicol + acetyl-CoA = chloramphenicol 3-acetate + CoA. Functionally, this enzyme is an effector of chloramphenicol resistance in bacteria. This chain is Chloramphenicol acetyltransferase 2 (cat-IIH), found in Haemophilus influenzae.